Here is a 293-residue protein sequence, read N- to C-terminus: Phosphatidylserine decarboxylase proenzyme (293 aa).

Catalysis depends on charge relay system; for autoendoproteolytic cleavage activity residues D88, H144, and S247. S247 serves as the catalytic Schiff-base intermediate with substrate; via pyruvic acid; for decarboxylase activity. The residue at position 247 (S247) is a Pyruvic acid (Ser); by autocatalysis.

This sequence belongs to the phosphatidylserine decarboxylase family. PSD-B subfamily. Prokaryotic type I sub-subfamily. Heterodimer of a large membrane-associated beta subunit and a small pyruvoyl-containing alpha subunit. Pyruvate is required as a cofactor. Post-translationally, is synthesized initially as an inactive proenzyme. Formation of the active enzyme involves a self-maturation process in which the active site pyruvoyl group is generated from an internal serine residue via an autocatalytic post-translational modification. Two non-identical subunits are generated from the proenzyme in this reaction, and the pyruvate is formed at the N-terminus of the alpha chain, which is derived from the carboxyl end of the proenzyme. The autoendoproteolytic cleavage occurs by a canonical serine protease mechanism, in which the side chain hydroxyl group of the serine supplies its oxygen atom to form the C-terminus of the beta chain, while the remainder of the serine residue undergoes an oxidative deamination to produce ammonia and the pyruvoyl prosthetic group on the alpha chain. During this reaction, the Ser that is part of the protease active site of the proenzyme becomes the pyruvoyl prosthetic group, which constitutes an essential element of the active site of the mature decarboxylase.

The protein resides in the cell membrane. The catalysed reaction is a 1,2-diacyl-sn-glycero-3-phospho-L-serine + H(+) = a 1,2-diacyl-sn-glycero-3-phosphoethanolamine + CO2. It functions in the pathway phospholipid metabolism; phosphatidylethanolamine biosynthesis; phosphatidylethanolamine from CDP-diacylglycerol: step 2/2. Catalyzes the formation of phosphatidylethanolamine (PtdEtn) from phosphatidylserine (PtdSer). The polypeptide is Phosphatidylserine decarboxylase proenzyme (Xylella fastidiosa (strain M12)).